We begin with the raw amino-acid sequence, 331 residues long: Pseudouridylate synthase TRUB2, mitochondrial (331 aa).

The N-terminal 10 residues, 1 to 10 (MGSAGLSRLH), are a transit peptide targeting the mitochondrion. The active-site Nucleophile is the Asp98. Residues 296–331 (KSLSPGLDTKQLPSPGWSWDSQGPSSTLGLERGAGQ) form a disordered region. Residues 314-323 (WDSQGPSSTL) are compositionally biased toward polar residues.

This sequence belongs to the pseudouridine synthase TruB family. In terms of assembly, forms a regulatory protein-RNA complex, consisting of RCC1L, NGRN, RPUSD3, RPUSD4, TRUB2, FASTKD2 and 16S mt-rRNA.

It localises to the mitochondrion matrix. It carries out the reaction a uridine in mRNA = a pseudouridine in mRNA. The enzyme catalyses uridine(55) in tRNA = pseudouridine(55) in tRNA. Its function is as follows. Minor enzyme contributing to the isomerization of uridine to pseudouridine (pseudouridylation) of specific mitochondrial mRNAs (mt-mRNAs) such as COXI and COXIII mt-mRNAs. As a component of a functional protein-RNA module, consisting of RCC1L, NGRN, RPUSD3, RPUSD4, TRUB2, FASTKD2 and 16S mitochondrial ribosomal RNA (16S mt-rRNA), controls 16S mt-rRNA abundance and is required for intra-mitochondrial translation. Also catalyzes pseudouridylation of some tRNAs, including synthesis of pseudouridine(55) from uracil-55, in the psi GC loop of a subset of tRNAs. The sequence is that of Pseudouridylate synthase TRUB2, mitochondrial from Homo sapiens (Human).